The following is a 513-amino-acid chain: ATP synthase subunit alpha (513 aa).

169–176 (GDRQTGKT) contacts ATP.

This sequence belongs to the ATPase alpha/beta chains family. As to quaternary structure, F-type ATPases have 2 components, CF(1) - the catalytic core - and CF(0) - the membrane proton channel. CF(1) has five subunits: alpha(3), beta(3), gamma(1), delta(1), epsilon(1). CF(0) has three main subunits: a(1), b(2) and c(9-12). The alpha and beta chains form an alternating ring which encloses part of the gamma chain. CF(1) is attached to CF(0) by a central stalk formed by the gamma and epsilon chains, while a peripheral stalk is formed by the delta and b chains.

It localises to the cell inner membrane. It catalyses the reaction ATP + H2O + 4 H(+)(in) = ADP + phosphate + 5 H(+)(out). Produces ATP from ADP in the presence of a proton gradient across the membrane. The alpha chain is a regulatory subunit. The sequence is that of ATP synthase subunit alpha from Cupriavidus necator (strain ATCC 17699 / DSM 428 / KCTC 22496 / NCIMB 10442 / H16 / Stanier 337) (Ralstonia eutropha).